The primary structure comprises 551 residues: Crossover junction endonuclease EME1B (551 aa).

Disordered regions lie at residues 1 to 55 (MNDH…PIFV) and 187 to 239 (TTLP…RLEK). The span at 37 to 51 (SDPTPQKQPPESSFT) shows a compositional bias: polar residues. The segment covering 202-239 (SKEDKTSAMEEKKLRKEQERLEKAASKAEEAERKRLEK) has biased composition (basic and acidic residues). Positions 203 to 253 (KEDKTSAMEEKKLRKEQERLEKAASKAEEAERKRLEKEKKKWEKGKLALKS) form a coiled coil. In terms of domain architecture, ERCC4 spans 287–484 (NPIERSIVWT…PSMKSLLKVY (198 aa)).

The protein belongs to the EME1/MMS4 family. Forms a heterodimer with MUS81. Mg(2+) serves as cofactor. It depends on Ca(2+) as a cofactor.

It localises to the nucleus. Functionally, interacts with MUS81 to form a DNA structure-specific endonuclease with substrate preference for branched DNA structures with a 5'-end at the branch nick. Typical substrates include 3'-flap structures, D-loops, replication forks, nicked Holliday junctions and also intact Holliday junctions with a reduced efficiency. May be required in mitosis for the processing of stalled or collapsed replication fork intermediates. Plays a role in DNA repair and in genotoxic stress-induced homologous recombination (HR) in somatic cells. Mediates a subset of meiotic recombination events that are insensitive to crossover interference. This chain is Crossover junction endonuclease EME1B (EME1B), found in Arabidopsis thaliana (Mouse-ear cress).